A 252-amino-acid chain; its full sequence is Adenosylcobinamide-GDP ribazoletransferase (252 aa).

7 helical membrane-spanning segments follow: residues 4 to 24, 35 to 55, 65 to 85, 102 to 122, 178 to 198, 201 to 221, and 232 to 252; these read LLLL…LPYI, LVPM…GGMN, SALV…DGAM, VMAD…ILLL, LLPG…VNNH, LITV…AAWF, and TYGA…TILT.

Belongs to the CobS family. It depends on Mg(2+) as a cofactor.

It localises to the cell inner membrane. It catalyses the reaction alpha-ribazole + adenosylcob(III)inamide-GDP = adenosylcob(III)alamin + GMP + H(+). It carries out the reaction alpha-ribazole 5'-phosphate + adenosylcob(III)inamide-GDP = adenosylcob(III)alamin 5'-phosphate + GMP + H(+). Its pathway is cofactor biosynthesis; adenosylcobalamin biosynthesis; adenosylcobalamin from cob(II)yrinate a,c-diamide: step 7/7. In terms of biological role, joins adenosylcobinamide-GDP and alpha-ribazole to generate adenosylcobalamin (Ado-cobalamin). Also synthesizes adenosylcobalamin 5'-phosphate from adenosylcobinamide-GDP and alpha-ribazole 5'-phosphate. This chain is Adenosylcobinamide-GDP ribazoletransferase, found in Trichormus variabilis (strain ATCC 29413 / PCC 7937) (Anabaena variabilis).